The chain runs to 512 residues: N-fatty-acyl-amino acid synthase/hydrolase PM20D1 (512 aa).

Residues 1 to 34 (MAVSRWKAVGSTLLAAFLVGLVVLIAVLLIRTYT) form the signal peptide. Asn45 and Asn81 each carry an N-linked (GlcNAc...) asparagine glycan. Zn(2+) is bound at residue His134. Asp136 is an active-site residue. Residue Asp166 participates in Zn(2+) binding. The active-site Proton acceptor is Glu200. Residues Glu201 and Asp227 each coordinate Zn(2+). Asn450 is a glycosylation site (N-linked (GlcNAc...) asparagine). Residue His472 participates in Zn(2+) binding.

The protein belongs to the peptidase M20A family.

It localises to the secreted. It catalyses the reaction an N-acyl-L-amino acid + H2O = an L-alpha-amino acid + a carboxylate. The enzyme catalyses an N-acyl-aromatic L-alpha-amino acid + H2O = an aromatic L-alpha-amino acid + a carboxylate. It carries out the reaction N-(5Z,8Z,11Z,14Z)-eicosatetraenoyl-glycine + H2O = (5Z,8Z,11Z,14Z)-eicosatetraenoate + glycine. The catalysed reaction is N-hexadecanoyl-L-phenylalanine + H2O = hexadecanoate + L-phenylalanine. It catalyses the reaction N-octadecanoyl-L-phenylalanine + H2O = octadecanoate + L-phenylalanine. The enzyme catalyses N-(4Z,7Z,10Z,13Z,16Z,19Z-docosahexaenoyl)-L-phenylalanine + H2O = (4Z,7Z,10Z,13Z,16Z,19Z)-docosahexaenoate + L-phenylalanine. It carries out the reaction N-(9Z-octadecenoyl)-L-asparagine + H2O = L-asparagine + (9Z)-octadecenoate. The catalysed reaction is (9Z)-octadecenoate + glycine = N-(9Z-octadecenoyl)glycine + H2O. It catalyses the reaction N-(9Z-octadecenoyl)-L-lysine + H2O = L-lysine + (9Z)-octadecenoate. The enzyme catalyses N-(9Z-octadecenoyl)-L-methionine + H2O = (9Z)-octadecenoate + L-methionine. It carries out the reaction N-(9Z-octadecenoyl)-L-serine + H2O = L-serine + (9Z)-octadecenoate. The catalysed reaction is N-(9Z-octadecenoyl)-L-tryptophan + H2O = L-tryptophan + (9Z)-octadecenoate. It catalyses the reaction N-(9Z-octadecenoyl)-L-tyrosine + H2O = L-tyrosine + (9Z)-octadecenoate. The enzyme catalyses N-(9Z-octadecenoyl)-L-glutamine + H2O = L-glutamine + (9Z)-octadecenoate. It carries out the reaction N-(5Z,8Z,11Z,14Z-eicosatetraenoyl)-L-serine + H2O = (5Z,8Z,11Z,14Z)-eicosatetraenoate + L-serine. The catalysed reaction is (5Z,8Z,11Z,14Z)-eicosatetraenoate + L-phenylalanine = N-(5Z,8Z,11Z,14Z-eicosatetraenoyl)-L-phenylalanine + H2O. It catalyses the reaction N-(9Z-octadecenoyl)-L-leucine + H2O = L-leucine + (9Z)-octadecenoate. The enzyme catalyses L-phenylalanine + (9Z)-octadecenoate = N-(9Z-octadecenoyl)-L-phenylalanine + H2O. It functions in the pathway amino-acid metabolism. Its pathway is energy metabolism; electron transfer. The protein operates within lipid metabolism; fatty acid metabolism. With respect to regulation, lipoproteins are powerful coactivators of PM20D1 activity in vitro and NAA biosynthesis in vivo. In terms of biological role, secreted enzyme that regulates the endogenous N-fatty acyl amino acid (NAAs) tissue and circulating levels by functioning as a bidirectional NAA synthase/hydrolase. It condenses free fatty acids and free amino acids to generate NAAs and bidirectionally catalyzes the reverse hydrolysis reaction. Some of these NAAs stimulate oxidative metabolism via mitochondrial uncoupling, increasing energy expenditure in a UPC1-independent manner. Thereby, this secreted protein may indirectly regulate whole body energy expenditure. PM20D1 circulates in tight association with both low- and high-density (LDL and HDL,respectively) lipoprotein particles. The chain is N-fatty-acyl-amino acid synthase/hydrolase PM20D1 from Xenopus tropicalis (Western clawed frog).